The following is a 235-amino-acid chain: Carbohydrate deacetylase (235 aa).

Mg(2+)-binding residues include H61 and H124.

It belongs to the YdjC deacetylase family. It depends on Mg(2+) as a cofactor.

Probably catalyzes the deacetylation of acetylated carbohydrates an important step in the degradation of oligosaccharides. In Bacillus cereus (strain B4264), this protein is Carbohydrate deacetylase.